Reading from the N-terminus, the 1027-residue chain is Kinesin heavy chain isoform 5A (1027 aa).

Position 2 is an N-acetylalanine (Ala2). The Kinesin motor domain maps to 9 to 327; sequence SIKVLCRFRP…LMFGQRAKTI (319 aa). Position 86 to 93 (86 to 93) interacts with ATP; that stretch reads GQTSSGKT. The interval 174–315 is microtubule-binding; that stretch reads VSSPEEILDV…PSSYNDAETK (142 aa). Residues 271 to 361 are necessary for interaction with ZFYVE27; sequence EGTKSYVPYR…KTKAQKETIA (91 aa). Positions 331-906 form a coiled coil; sequence ASVNLELTAE…VDRIKEAVRY (576 aa). An interaction with BICD2 region spans residues 353 to 1027; sequence TKAQKETIAK…FPLHQETAAS (675 aa). Thr397 carries the phosphothreonine modification. A disordered region spans residues 906–937; sequence YKSSGKRGHSAQIAKPVRPGHYPASSPTNPYG. The globular stretch occupies residues 907–1027; it reads KSSGKRGHSA…FPLHQETAAS (121 aa).

Belongs to the TRAFAC class myosin-kinesin ATPase superfamily. Kinesin family. Kinesin subfamily. In terms of assembly, oligomer composed of two heavy chains and two light chains. Interacts with GRIP1. Interacts with FMR1 (via C-terminus); this interaction is increased in a mGluR-dependent manner. Interacts with BORCS5. Interacts with ZFYVE27. Interacts with VAPA, VAPB, SURF4, RAB11A (GDP-bound form), RAB11B (GDP-bound form) and RTN3 in a ZFYVE27-dependent manner. Interacts with BICD2. Interacts with DTNB.

It is found in the cytoplasm. Its subcellular location is the perinuclear region. The protein localises to the cytoskeleton. It localises to the perikaryon. It catalyses the reaction ATP + H2O + a kinesin associated with a microtubule at position (n) = ADP + phosphate a kinesin associated with a microtubule at position (n+1, toward the plus end).. Functionally, microtubule-dependent motor required for slow axonal transport of neurofilament proteins (NFH, NFM and NFL). Can induce formation of neurite-like membrane protrusions in non-neuronal cells in a ZFYVE27-dependent manner. The ZFYVE27-KIF5A complex contributes to the vesicular transport of VAPA, VAPB, SURF4, RAB11A, RAB11B and RTN3 proteins in neurons. Required for anterograde axonal transportation of MAPK8IP3/JIP3 which is essential for MAPK8IP3/JIP3 function in axon elongation. The protein is Kinesin heavy chain isoform 5A (Kif5a) of Mus musculus (Mouse).